The sequence spans 177 residues: Large ribosomal subunit protein uL10 (177 aa).

It belongs to the universal ribosomal protein uL10 family. As to quaternary structure, part of the ribosomal stalk of the 50S ribosomal subunit. The N-terminus interacts with L11 and the large rRNA to form the base of the stalk. The C-terminus forms an elongated spine to which L12 dimers bind in a sequential fashion forming a multimeric L10(L12)X complex.

In terms of biological role, forms part of the ribosomal stalk, playing a central role in the interaction of the ribosome with GTP-bound translation factors. This is Large ribosomal subunit protein uL10 from Leptospira borgpetersenii serovar Hardjo-bovis (strain JB197).